A 118-amino-acid chain; its full sequence is UPF0102 protein Bcav_2532 (118 aa).

This sequence belongs to the UPF0102 family.

This is UPF0102 protein Bcav_2532 from Beutenbergia cavernae (strain ATCC BAA-8 / DSM 12333 / CCUG 43141 / JCM 11478 / NBRC 16432 / NCIMB 13614 / HKI 0122).